Reading from the N-terminus, the 428-residue chain is Elongation factor 1-alpha (428 aa).

Residues 5–215 (KPHVNIVFIG…ALDQIPEPPK (211 aa)) enclose the tr-type G domain. The G1 stretch occupies residues 14 to 21 (GHVDHGKS). 14–21 (GHVDHGKS) serves as a coordination point for GTP. S21 contributes to the Mg(2+) binding site. Positions 68–72 (GITID) are G2. The tract at residues 89–92 (DAPG) is G3. Residues 89-93 (DAPGH) and 144-147 (NKMD) contribute to the GTP site. The interval 144–147 (NKMD) is G4. Residues 181 to 183 (SAW) are G5.

The protein belongs to the TRAFAC class translation factor GTPase superfamily. Classic translation factor GTPase family. EF-Tu/EF-1A subfamily.

It is found in the cytoplasm. It carries out the reaction GTP + H2O = GDP + phosphate + H(+). GTP hydrolase that promotes the GTP-dependent binding of aminoacyl-tRNA to the A-site of ribosomes during protein biosynthesis. The polypeptide is Elongation factor 1-alpha (Thermococcus kodakarensis (strain ATCC BAA-918 / JCM 12380 / KOD1) (Pyrococcus kodakaraensis (strain KOD1))).